The chain runs to 511 residues: MWELVALLLLTLAYFFWSKSKTCGAKSPKSLPFLPLVGSLPFIPRHGHPHVNFFKLQEKYGPIYSLRLGSTTTVIIGQYQLAKEVLVKKGKEFSGRPHMVTLGLLSDQGKGIAFADSGGSWQLHRKLALSSFALFRDGNQKLEKIICQKASSLCDFLLTHNEESIDLSEPIFNSITNIICIICFGISYENRDPILATIKSFTEGILNSLGNDHLVDIFPWLTIFPNKTVDMIKKNVKIRDEVLSGILEKCKEKFNSDSISSLMDLLIQAKTNADNNNTSEGQGSNAFSDMHILATIADIFGAGIETTASVLSWIIAFLLHNPEVKKKIQKEIDQNIGFSRTPTFNDRNHLLMLEATIREVLRIRPVAPMLIPHRANSDMSIGEFSIPKFTPVIINLWALHHSEKEWDQPDRFMPERFLDPTGSHLITPSLSYLPFGAGARSCIGEVLARQELFLFMAHLLQRFDLDVPDDEQPPCLKGNANVVFLIDPFKVKITVRQAWKDAQAEVNTWRP.

C442 serves as a coordination point for heme.

It belongs to the cytochrome P450 family. Heme is required as a cofactor.

Its subcellular location is the endoplasmic reticulum membrane. It localises to the microsome membrane. It carries out the reaction a C21-steroid + reduced [NADPH--hemoprotein reductase] + O2 = a 17alpha-hydroxy-C21-steroid + oxidized [NADPH--hemoprotein reductase] + H2O + H(+). The catalysed reaction is progesterone + reduced [NADPH--hemoprotein reductase] + O2 = 17alpha-hydroxyprogesterone + oxidized [NADPH--hemoprotein reductase] + H2O + H(+). It catalyses the reaction pregnenolone + reduced [NADPH--hemoprotein reductase] + O2 = 17alpha-hydroxypregnenolone + oxidized [NADPH--hemoprotein reductase] + H2O + H(+). The enzyme catalyses 17alpha-hydroxyprogesterone + reduced [NADPH--hemoprotein reductase] + O2 = androst-4-ene-3,17-dione + acetate + oxidized [NADPH--hemoprotein reductase] + H2O + 2 H(+). It carries out the reaction 17alpha-hydroxyprogesterone + reduced [NADPH--hemoprotein reductase] + O2 = 16alpha,17alpha-dihydroxyprogesterone + oxidized [NADPH--hemoprotein reductase] + H2O + H(+). The catalysed reaction is 16alpha,17alpha-dihydroxyprogesterone + reduced [NADPH--hemoprotein reductase] + O2 = 6beta,16alpha,17alpha-trihydroxyprogesterone + oxidized [NADPH--hemoprotein reductase] + H2O + H(+). It catalyses the reaction 17alpha-hydroxypregnenolone + reduced [NADPH--hemoprotein reductase] + O2 = 3beta-hydroxyandrost-5-en-17-one + acetate + oxidized [NADPH--hemoprotein reductase] + H2O + 2 H(+). The enzyme catalyses 16alpha,17alpha-dihydroxypregnenolone + reduced [NADPH--hemoprotein reductase] + O2 = 3beta,16alpha-dihydroxy-androst-5-en-17-one + acetate + oxidized [NADPH--hemoprotein reductase] + H2O + 2 H(+). It carries out the reaction 3beta-hydroxyandrost-5-en-17-one + reduced [NADPH--hemoprotein reductase] + O2 = 3beta,16alpha-dihydroxy-androst-5-en-17-one + oxidized [NADPH--hemoprotein reductase] + H2O + H(+). The catalysed reaction is androst-4-ene-3,17-dione + reduced [NADPH--hemoprotein reductase] + O2 = 16alpha-hydroxyandrost-4-ene-3,17-dione + oxidized [NADPH--hemoprotein reductase] + H2O + H(+). It functions in the pathway steroid hormone biosynthesis. The protein operates within steroid biosynthesis; glucocorticoid biosynthesis. Its activity is regulated as follows. Regulated predominantly by intracellular cAMP levels. The 17,20-lyase activity is stimulated by cytochrome b5, which acts as an allosteric effector increasing the Vmax of the lyase activity. Its function is as follows. A cytochrome P450 monooxygenase involved in corticoid and androgen biosynthesis. Catalyzes 17-alpha hydroxylation of C21 steroids, which is common for both pathways. A second oxidative step, required only for androgen synthesis, involves an acyl-carbon cleavage. The 17-alpha hydroxy intermediates, as part of adrenal glucocorticoids biosynthesis pathway, are precursors of cortisol. Hydroxylates steroid hormones, pregnenolone and progesterone to form 17-alpha hydroxy metabolites, followed by the cleavage of the C17-C20 bond to form C19 steroids, dehydroepiandrosterone (DHEA) and androstenedione. Has 16-alpha hydroxylase activity. Catalyzes 16-alpha hydroxylation of 17-alpha hydroxy pregnenolone, followed by the cleavage of the C17-C20 bond to form 16-alpha-hydroxy DHEA. Also 16-alpha hydroxylates androgens, relevant for estriol synthesis. Mechanistically, uses molecular oxygen inserting one oxygen atom into a substrate, and reducing the second into a water molecule, with two electrons provided by NADPH via cytochrome P450 reductase (CPR; NADPH-ferrihemoprotein reductase). In Mesocricetus auratus (Golden hamster), this protein is Steroid 17-alpha-hydroxylase/17,20 lyase (CYP17A1).